Consider the following 686-residue polypeptide: Glycogenin (686 aa).

Residues Leu13, Asn16, Tyr19, and Arg82 each coordinate UDP. Residues Leu13, Asn16, Tyr19, Arg82, Lys91, Asp107, Ala108, Asp109, Asn139, Thr140, Asp166, Asp169, and Gln170 each contribute to the UDP-alpha-D-glucose site. Residues Asp107, Ala108, and Asp109 each contribute to the UDP site. Asp107 provides a ligand contact to Mn(2+). Asp109 lines the Mn(2+) pocket. O-linked (Glc...) tyrosine glycosylation is found at Tyr196 and Tyr198. UDP is bound by residues His213, Gly216, and Lys219. A Mn(2+)-binding site is contributed by His213. The UDP-alpha-D-glucose site is built by Gly216 and Lys219. Disordered regions lie at residues 264–331, 381–444, 460–533, and 603–686; these read VKGE…ANFP, PEPT…RGNA, KHRR…GVPA, and KPLR…VLET. 2 stretches are compositionally biased toward low complexity: residues 285–308 and 398–416; these read SSQS…YTSH and SAAS…ASPT. The not required for catalytic activity stretch occupies residues 307 to 686; sequence SHGASWDASR…TEEERDVLET (380 aa). Composition is skewed to polar residues over residues 424–442 and 471–483; these read VTPT…TTRG and AATS…GRAQ. Positions 677–686 are enriched in acidic residues; sequence TEEERDVLET.

It belongs to the glycosyltransferase 8 family. Glycogenin subfamily. As to quaternary structure, interacts with glycogen synthase gsy-1; the interaction is direct. Mn(2+) is required as a cofactor.

It localises to the cytoplasm. It is found in the vacuole. It catalyses the reaction L-tyrosyl-[glycogenin] + UDP-alpha-D-glucose = alpha-D-glucosyl-L-tyrosyl-[glycogenin] + UDP + H(+). The enzyme catalyses [1,4-alpha-D-glucosyl](n)-L-tyrosyl-[glycogenin] + UDP-alpha-D-glucose = [1,4-alpha-D-glucosyl](n+1)-L-tyrosyl-[glycogenin] + UDP + H(+). Its function is as follows. Self-glucosylating initiator of glycogen synthesis. It catalyzes the formation of a short alpha (1,4)-glucosyl chain covalently attached via a glucose 1-O-tyrosyl linkage to internal tyrosine residues and these chains act as primers for the elongation reaction catalyzed by glycogen synthase. This is Glycogenin from Neurospora crassa (strain ATCC 24698 / 74-OR23-1A / CBS 708.71 / DSM 1257 / FGSC 987).